The sequence spans 145 residues: Large ribosomal subunit protein uL15 (145 aa).

A disordered region spans residues 1 to 52 (MRLNTLSPAAGSKRVKHRPGRGIGSGLGKTGGRGVKGQTSRSGGGKVRNGFE). Gly residues-rich tracts occupy residues 21 to 35 (RGIG…GRGV) and 42 to 52 (SGGGKVRNGFE).

Belongs to the universal ribosomal protein uL15 family. Part of the 50S ribosomal subunit.

Its function is as follows. Binds to the 23S rRNA. This Aeromonas hydrophila subsp. hydrophila (strain ATCC 7966 / DSM 30187 / BCRC 13018 / CCUG 14551 / JCM 1027 / KCTC 2358 / NCIMB 9240 / NCTC 8049) protein is Large ribosomal subunit protein uL15.